The chain runs to 370 residues: Popeye domain-containing 2 (370 aa).

2 consecutive transmembrane segments (helical) span residues 51–71 (ALYI…WGWL) and 78–98 (VFIW…HLIF). The disordered stretch occupies residues 275 to 349 (PSPPGSEGGS…SGEDSTSLIL (75 aa)). Over residues 283-294 (GSASSPPRGSLG) the composition is skewed to low complexity. 2 stretches are compositionally biased toward polar residues: residues 307–319 (NPGS…QPDQ) and 330–347 (QHWS…STSL).

It belongs to the popeye family. Expressed in the heart and, slightly, in skeletal muscle.

It localises to the membrane. The protein resides in the cell membrane. It is found in the sarcolemma. Functionally, important for striated muscle differentiation and cardiac morphogenesis. Is also required for cardiac conduction system development, plays a regulatory function in heart rate dynamics mediated, at least in part, through cAMP-binding. The polypeptide is Popeye domain-containing 2 (Danio rerio (Zebrafish)).